The sequence spans 84 residues: Large ribosomal subunit protein bL27 (84 aa).

The segment at 1-27 (MAHKKGQGASRNGRDSKSKRLGVKVGA) is disordered.

The protein belongs to the bacterial ribosomal protein bL27 family.

The polypeptide is Large ribosomal subunit protein bL27 (Chlamydia pneumoniae (Chlamydophila pneumoniae)).